The following is a 745-amino-acid chain: Polyribonucleotide nucleotidyltransferase (745 aa).

2 residues coordinate Mg(2+): Asp-487 and Asp-493. Positions 554–613 constitute a KH domain; it reads PRIETMQIPTDKIRDVIGTGGKIIREIVEKTGAKINIEDTGVVKIASSDGKAIKAAYNWI. The S1 motif domain maps to 623–691; that stretch reads GTIYDGTIVK…ERGKIRLSMK (69 aa). A disordered region spans residues 695–745; it reads QETGEDITEKLKAERAERGEPEREERSDRGDRGDRGPRRDRGERRRESSGE. Positions 701–745 are enriched in basic and acidic residues; it reads ITEKLKAERAERGEPEREERSDRGDRGDRGPRRDRGERRRESSGE.

This sequence belongs to the polyribonucleotide nucleotidyltransferase family. Requires Mg(2+) as cofactor.

Its subcellular location is the cytoplasm. It carries out the reaction RNA(n+1) + phosphate = RNA(n) + a ribonucleoside 5'-diphosphate. In terms of biological role, involved in mRNA degradation. Catalyzes the phosphorolysis of single-stranded polyribonucleotides processively in the 3'- to 5'-direction. The protein is Polyribonucleotide nucleotidyltransferase of Methylorubrum populi (strain ATCC BAA-705 / NCIMB 13946 / BJ001) (Methylobacterium populi).